We begin with the raw amino-acid sequence, 506 residues long: MDTILALTGITKRFPGVVALRGIDLRVARGEIHALLGENGAGKSTLMKILCGIHPPDEGVIALDGEPRRFANHHDAIAAGVGIVFQEFSLIPELNAVDNLFLGREWRGRLGLRERARMRRAAADIFARLDVAIDLSAPVRELSVAQQQFVEIGKALSLDARLLILDEPTATLTPAEAAHLFGVMRELKRRGVAMIFISHHLDEIFEVCDRITVLRDGQYVGTTEVARTDVGALVEMMVGRRIEQSFPPKPRLARDAAPVLEVDALQVRENGPVNRFALREGEILGFAGLVGSGRTSSALALIGAKPARVRRMRVRGRPVRLADPAAALAAGIGLLPESRKTQGLIPAFSIRHNIAINNLGKHRRLRWFVDAAAETRTTLELMQRLGVKAPTPHTRVDTLSGGNQQKVVIARWLNHHTRILIFDEPTRGIDIGAKAEIYQLMRELSARGYSIVLISSELPEIVGLCDRVAVFRQGRIEAMLEGEAIEPNTVMTYATSDVRGANHEHA.

2 ABC transporter domains span residues leucine 5–arginine 241 and arginine 254–valine 498. Glycine 37–serine 44 contacts ATP.

The protein belongs to the ABC transporter superfamily. Ribose importer (TC 3.A.1.2.1) family. In terms of assembly, the complex is composed of an ATP-binding protein (RbsA), two transmembrane proteins (RbsC) and a solute-binding protein (RbsB).

It localises to the cell inner membrane. The enzyme catalyses D-ribose(out) + ATP + H2O = D-ribose(in) + ADP + phosphate + H(+). Functionally, part of the ABC transporter complex RbsABC involved in ribose import. Responsible for energy coupling to the transport system. This chain is Ribose import ATP-binding protein RbsA, found in Burkholderia mallei (strain ATCC 23344).